The sequence spans 560 residues: 2-succinyl-5-enolpyruvyl-6-hydroxy-3-cyclohexene-1-carboxylate synthase (560 aa).

The protein belongs to the TPP enzyme family. MenD subfamily. Homodimer. Requires Mg(2+) as cofactor. It depends on Mn(2+) as a cofactor. The cofactor is thiamine diphosphate.

The catalysed reaction is isochorismate + 2-oxoglutarate + H(+) = 5-enolpyruvoyl-6-hydroxy-2-succinyl-cyclohex-3-ene-1-carboxylate + CO2. Its pathway is quinol/quinone metabolism; 1,4-dihydroxy-2-naphthoate biosynthesis; 1,4-dihydroxy-2-naphthoate from chorismate: step 2/7. The protein operates within quinol/quinone metabolism; menaquinone biosynthesis. Functionally, catalyzes the thiamine diphosphate-dependent decarboxylation of 2-oxoglutarate and the subsequent addition of the resulting succinic semialdehyde-thiamine pyrophosphate anion to isochorismate to yield 2-succinyl-5-enolpyruvyl-6-hydroxy-3-cyclohexene-1-carboxylate (SEPHCHC). In Lactococcus lactis subsp. lactis (strain IL1403) (Streptococcus lactis), this protein is 2-succinyl-5-enolpyruvyl-6-hydroxy-3-cyclohexene-1-carboxylate synthase.